Consider the following 94-residue polypeptide: uncharacterized protein (94 aa).

Its function is as follows. Could be a silencing control element for the regulation of the restriction system. This is an uncharacterized protein from Herpetosiphon aurantiacus (Herpetosiphon giganteus).